Here is a 480-residue protein sequence, read N- to C-terminus: Probable efflux pump outer membrane protein SepC (480 aa).

An N-terminal signal peptide occupies residues 1 to 16; it reads MKTHYLSIALSVALSG. A lipid anchor (N-palmitoyl cysteine) is attached at cysteine 17. Cysteine 17 is lipidated: S-diacylglycerol cysteine.

The protein belongs to the outer membrane factor (OMF) (TC 1.B.17) family.

The protein localises to the cell outer membrane. Probable outer membrane component of the SepABC efflux pump with unknown specificity. This chain is Probable efflux pump outer membrane protein SepC (sepC), found in Pseudomonas putida (strain ATCC 700007 / DSM 6899 / JCM 31910 / BCRC 17059 / LMG 24140 / F1).